Here is a 143-residue protein sequence, read N- to C-terminus: Large-conductance mechanosensitive channel (143 aa).

The next 2 helical transmembrane spans lie at 10-30 and 89-109; these read FAVKGNVMDLAVGVIIGGAFS and GSFITVAINFVILAFIIFLMV.

It belongs to the MscL family. As to quaternary structure, homopentamer.

The protein localises to the cell inner membrane. Its function is as follows. Channel that opens in response to stretch forces in the membrane lipid bilayer. May participate in the regulation of osmotic pressure changes within the cell. In Burkholderia vietnamiensis (strain G4 / LMG 22486) (Burkholderia cepacia (strain R1808)), this protein is Large-conductance mechanosensitive channel.